Here is a 393-residue protein sequence, read N- to C-terminus: MTASATRNDLMIVNLGPQHPSMHGVLRLIVTLDGEDVIDCEPILGYLHRGMEKIAENRTIIQYLPYVTRWDYLATMFTEAITVNAPEQLGNIQVPKRASYIRVIMLELSRIASHLLWLGPFLADIGAQTPFFYIFRERELIYDLFEAATGMRMMHNYFRIGGVAADLPHGWIDKCLDFCDFFLTRVTEYQKLITRNPIFLERVEGVGIIGGAEAINWGLSGPMLRASGIQWDLRKVDHYESYDEFDWGVQWQKEGDSLARYLVRISEMTESIKIIQQALEGIPGGPYENLEIRRFDKVRDPEWNDFDYRFISKKPSPTFELSKQELYVRVEAPKGELGIFLIGDRGVFPWRWKIRPPGFINLQILPQLVKRMKLADIMTILGSIDIIMGEVDR.

Belongs to the complex I 49 kDa subunit family. In terms of assembly, NDH is composed of at least 16 different subunits, 5 of which are encoded in the nucleus.

The protein resides in the plastid. It is found in the chloroplast thylakoid membrane. It catalyses the reaction a plastoquinone + NADH + (n+1) H(+)(in) = a plastoquinol + NAD(+) + n H(+)(out). The catalysed reaction is a plastoquinone + NADPH + (n+1) H(+)(in) = a plastoquinol + NADP(+) + n H(+)(out). Its function is as follows. NDH shuttles electrons from NAD(P)H:plastoquinone, via FMN and iron-sulfur (Fe-S) centers, to quinones in the photosynthetic chain and possibly in a chloroplast respiratory chain. The immediate electron acceptor for the enzyme in this species is believed to be plastoquinone. Couples the redox reaction to proton translocation, and thus conserves the redox energy in a proton gradient. This Panax ginseng (Korean ginseng) protein is NAD(P)H-quinone oxidoreductase subunit H, chloroplastic.